The primary structure comprises 599 residues: Exocyst complex component EXO70B2 (599 aa).

Residues 38–58 (GASGNRGGDPRPTPSRGGSNV) form a disordered region.

Belongs to the EXO70 family. As to quaternary structure, self interacts. Interacts with EXO70B1. Interacts with the exocyst subunits EXO70H1, SEC5A and SEC15B. Binds to SNAP33. Subunit of the exocyst complex that mediates vesicle tethering during exocytosis. Binds to PUB22. Target of the E3 ubiquitin-protein ligase PUB22 that mediates its ubiquitination and degradation via the 26S proteasome to attenuate pathogen-associated molecular patterns (PAMP)-induced signaling, especially is response to the bacterial elicitor flg22. Mostly expressed in leaves and, to a lower extent, in roots, cotyledons, internodes, flower buds, siliques and anthers.

It is found in the cytoplasmic vesicle. The protein localises to the phagosome. Its subcellular location is the cytoplasm. The protein resides in the nucleus. Functionally, component of an exocyst subcomplex specifically involved in autophagy-related, Golgi-independent membrane traffic to the vacuole. Regulates autophagosome formation and autophagy-related Golgi-independent import into the vacuole. Positive regulator of defense responses to pathogenic bacteria (e.g. P.syringae pv. maculicola), to the biotrophic oomycete H.arabidopsidis and to fungi (e.g. B.graminis hordei), especially in cell wall apposition formation related to plant defense. Required for both immediate and later responses triggered by pathogen-associated molecular patterns (PAMPs). Positive regulator of abscisic acid (ABA)-independent mannitol (drought)-promoted stomatal closure. This Arabidopsis thaliana (Mouse-ear cress) protein is Exocyst complex component EXO70B2.